The primary structure comprises 254 residues: Small ribosomal subunit protein mS40 (254 aa).

A mitochondrion-targeting transit peptide spans 1–33 (MAAPLRHTLLKLVPTLLRSSYVAQVPLQTLCTR). S47 is modified (phosphoserine). The disordered stretch occupies residues 218 to 254 (YQGNLLEESGPPPESMPEMPTTPPAESSIEQPGSQSA). Residues 227-240 (GPPPESMPEMPTTP) show a composition bias toward pro residues.

The protein belongs to the bacterial ribosomal protein bS18 family. Mitochondrion-specific ribosomal protein mS40 subfamily. As to quaternary structure, component of the mitochondrial ribosome small subunit (28S) which comprises a 12S rRNA and about 30 distinct proteins.

Its subcellular location is the mitochondrion. The chain is Small ribosomal subunit protein mS40 (Mrps18b) from Mus musculus (Mouse).